Reading from the N-terminus, the 322-residue chain is Manganese-dependent ADP-ribose/CDP-alcohol diphosphatase (322 aa).

Positions 13, 15, 60, 96, 228, 265, and 267 each coordinate Zn(2+).

The protein belongs to the ADPRibase-Mn family. In terms of assembly, monomer. The cofactor is Mg(2+).

The catalysed reaction is CDP-choline + H2O = phosphocholine + CMP + 2 H(+). It catalyses the reaction ADP-D-ribose + H2O = D-ribose 5-phosphate + AMP + 2 H(+). The enzyme catalyses CDP-glycerol + H2O = sn-glycerol 3-phosphate + CMP + 2 H(+). Hydrolyzes ADP-ribose, IDP-ribose, CDP-glycerol, CDP-choline and CDP-ethanolamine, but not other non-reducing ADP-sugars or CDP-glucose. The sequence is that of Manganese-dependent ADP-ribose/CDP-alcohol diphosphatase (adprm) from Danio rerio (Zebrafish).